Reading from the N-terminus, the 436-residue chain is Anaerobic glycerol-3-phosphate dehydrogenase subunit B (436 aa).

This sequence belongs to the anaerobic G-3-P dehydrogenase subunit B family. Composed of a catalytic GlpA/B dimer and of membrane bound GlpC. Requires FMN as cofactor.

The enzyme catalyses a quinone + sn-glycerol 3-phosphate = dihydroxyacetone phosphate + a quinol. Its pathway is polyol metabolism; glycerol degradation via glycerol kinase pathway; glycerone phosphate from sn-glycerol 3-phosphate (anaerobic route): step 1/1. Conversion of glycerol 3-phosphate to dihydroxyacetone. Uses fumarate or nitrate as electron acceptor. The protein is Anaerobic glycerol-3-phosphate dehydrogenase subunit B of Vibrio cholerae serotype O1 (strain M66-2).